A 500-amino-acid polypeptide reads, in one-letter code: Oryzalexin D synthase (500 aa).

Residues 4–24 traverse the membrane as a helical segment; the sequence is SQMWLLWGALSVALFFYFSTL. Cysteine 442 contributes to the heme binding site.

It belongs to the cytochrome P450 family. Heme serves as cofactor.

Its subcellular location is the membrane. The catalysed reaction is ent-cassa-12,15-diene + reduced [NADPH--hemoprotein reductase] + O2 = ent-11beta-hydroxycassa-12,15-diene + oxidized [NADPH--hemoprotein reductase] + H2O + H(+). It carries out the reaction ent-sandaracopimaradien-3beta-ol + reduced [NADPH--hemoprotein reductase] + O2 = oryzalexin D + oxidized [NADPH--hemoprotein reductase] + H2O + H(+). Its function is as follows. Enzyme of the diterpenoid metabolism involved in the biosynthesis of both phytocassane and the oryzalexin class of phytoalexins. Can hydroxylate syn-pimaradiene, ent-pimaradiene, ent-sandaracopimaradiene, ent-isokaurene, ent-kaurene, and ent-cassadiene, but no activity with syn-stemodene, syn-stemarene, syn-labdatriene, C11-alpha-hydroxy-ent-cassadiene or syn-pimadien-19-oic acid as substrates. Hydroxylates 3-alpha-hydroxy-ent-sandaracopimaradiene at C-7-beta, resulting in a 3-alpha,7-beta-diol corresponding to oryzalexins D. This is Oryzalexin D synthase from Oryza sativa subsp. japonica (Rice).